A 619-amino-acid chain; its full sequence is 1-deoxy-D-xylulose-5-phosphate synthase (619 aa).

Thiamine diphosphate contacts are provided by residues His74 and 115 to 117; that span reads GHS. Asp146 contributes to the Mg(2+) binding site. Thiamine diphosphate-binding positions include 147–148, Asn175, Tyr285, and Glu365; that span reads GA. Asn175 is a binding site for Mg(2+).

This sequence belongs to the transketolase family. DXPS subfamily. Homodimer. Mg(2+) is required as a cofactor. It depends on thiamine diphosphate as a cofactor.

It catalyses the reaction D-glyceraldehyde 3-phosphate + pyruvate + H(+) = 1-deoxy-D-xylulose 5-phosphate + CO2. It participates in metabolic intermediate biosynthesis; 1-deoxy-D-xylulose 5-phosphate biosynthesis; 1-deoxy-D-xylulose 5-phosphate from D-glyceraldehyde 3-phosphate and pyruvate: step 1/1. Functionally, catalyzes the acyloin condensation reaction between C atoms 2 and 3 of pyruvate and glyceraldehyde 3-phosphate to yield 1-deoxy-D-xylulose-5-phosphate (DXP). The protein is 1-deoxy-D-xylulose-5-phosphate synthase of Clostridium acetobutylicum (strain ATCC 824 / DSM 792 / JCM 1419 / IAM 19013 / LMG 5710 / NBRC 13948 / NRRL B-527 / VKM B-1787 / 2291 / W).